A 323-amino-acid chain; its full sequence is tRNA(Ile)-lysidine synthase (323 aa).

33-38 serves as a coordination point for ATP; the sequence is SGGSDS.

This sequence belongs to the tRNA(Ile)-lysidine synthase family.

The protein localises to the cytoplasm. It carries out the reaction cytidine(34) in tRNA(Ile2) + L-lysine + ATP = lysidine(34) in tRNA(Ile2) + AMP + diphosphate + H(+). Ligates lysine onto the cytidine present at position 34 of the AUA codon-specific tRNA(Ile) that contains the anticodon CAU, in an ATP-dependent manner. Cytidine is converted to lysidine, thus changing the amino acid specificity of the tRNA from methionine to isoleucine. In Mycobacterium leprae (strain TN), this protein is tRNA(Ile)-lysidine synthase.